We begin with the raw amino-acid sequence, 231 residues long: Somatolactin-1 (231 aa).

A signal peptide spans 1–24; that stretch reads MRMIRAIKQGQWAVLLWPYLLTAS. Intrachain disulfides connect Cys29–Cys39, Cys89–Cys205, and Cys222–Cys230. Asn145 carries N-linked (GlcNAc...) asparagine glycosylation.

Belongs to the somatotropin/prolactin family. Pituitary gland.

It localises to the secreted. This is Somatolactin-1 from Sparus aurata (Gilthead sea bream).